The sequence spans 347 residues: Heme A synthase (347 aa).

Transmembrane regions (helical) follow at residues 14 to 34 (VKVWLCICSIGILLMVLVGGI), 95 to 115 (YFHRLLGRIVGLIFLLPFLYF), 125 to 145 (LIVNFIIICVLILFQGVMGWL), 166 to 186 (LLLALLIFYLLWRQFLSAVIL), 198 to 218 (LIFYVISILIVIQITFGSLVA), 260 to 280 (FIHEVIAVLILVIVSATLLIL), 289 to 309 (LLLVCLLIQLTFGILTFIYNV), and 311 to 331 (IALASLHQVTAFILFAINTYL). His262 contacts heme. His317 lines the heme pocket.

This sequence belongs to the COX15/CtaA family. Type 2 subfamily. Interacts with CtaB. Requires heme b as cofactor.

It is found in the cell membrane. The catalysed reaction is Fe(II)-heme o + 2 A + H2O = Fe(II)-heme a + 2 AH2. It participates in porphyrin-containing compound metabolism; heme A biosynthesis; heme A from heme O: step 1/1. Catalyzes the conversion of heme O to heme A by two successive hydroxylations of the methyl group at C8. The first hydroxylation forms heme I, the second hydroxylation results in an unstable dihydroxymethyl group, which spontaneously dehydrates, resulting in the formyl group of heme A. The sequence is that of Heme A synthase from Ehrlichia canis (strain Jake).